Consider the following 191-residue polypeptide: Fe/S biogenesis protein NfuA (191 aa).

2 residues coordinate [4Fe-4S] cluster: Cys149 and Cys152.

Belongs to the NfuA family. As to quaternary structure, homodimer. [4Fe-4S] cluster serves as cofactor.

In terms of biological role, involved in iron-sulfur cluster biogenesis. Binds a 4Fe-4S cluster, can transfer this cluster to apoproteins, and thereby intervenes in the maturation of Fe/S proteins. Could also act as a scaffold/chaperone for damaged Fe/S proteins. In Pseudoalteromonas translucida (strain TAC 125), this protein is Fe/S biogenesis protein NfuA.